The sequence spans 396 residues: Cyclic GMP-AMP synthase-like receptor (396 aa).

ATP is bound by residues S63 and 75 to 77 (EFD). Mg(2+)-binding residues include E75, D77, and D194. D194 serves as a coordination point for GTP. ATP-binding positions include 241-244 (QEQE), K262, and 275-279 (SYYLK). Residues V286, E287, and D292 each contribute to the Mn(2+) site. The disordered stretch occupies residues 376–396 (IMNGGNPQQSANAENGSCLSM). Positions 380–396 (GNPQQSANAENGSCLSM) are enriched in polar residues.

The protein belongs to the mab-21 family. Mg(2+) serves as cofactor. Requires Mn(2+) as cofactor.

The enzyme catalyses GTP + ATP = 2',3'-cGAMP + 2 diphosphate. It catalyses the reaction GTP + ATP = pppGp(2'-5')A + diphosphate. The catalysed reaction is pppGp(2'-5')A = 2',3'-cGAMP + diphosphate. In terms of biological role, nucleotidyltransferase that catalyzes the formation of cyclic GMP-AMP (2',3'-cGAMP) from ATP and GTP and plays a key role in innate immunity. Acts as a key sensor of double-stranded RNA (dsRNA), the presence of dsRNA in the cytoplasm being a danger signal that triggers the immune responses. Directly binds dsRNA, activating the nucleotidyltransferase activity, leading to synthesis of 2',3'-cGAMP, a second messenger that binds to and activates Sting, thereby triggering the immune response via activation of the NF-kappa-B transcription factor. The polypeptide is Cyclic GMP-AMP synthase-like receptor (Aethina tumida (Small hive beetle)).